Reading from the N-terminus, the 614-residue chain is Putative amino acid transporter AAT1 (614 aa).

11 helical membrane-spanning segments follow: residues 184 to 216 (VLFL…LILL), 222 to 243 (YITT…YGNL), 255 to 275 (LIDF…LILV), 295 to 311 (RIFI…PLTF), 318 to 340 (INCF…GYQS), 360 to 380 (HFFK…NACF), 401 to 417 (ILIQ…LGYL), 437 to 459 (SILL…NFIA), 531 to 547 (CAAI…EFNV), 553 to 575 (FIGI…LIYY), and 587 to 613 (RYAT…FIII).

The protein belongs to the amino acid/polyamine transporter 2 family.

The protein resides in the vacuole membrane. In terms of biological role, putative amino acid transporter. Involved in maintaining the osmotic homeostasis of the digestive vacuole. Important for the timely development and growth of the asexual-stage parasites and male gametocyte maturation. This is Putative amino acid transporter AAT1 from Plasmodium berghei (strain Anka).